Reading from the N-terminus, the 653-residue chain is DNA polymerase (653 aa).

The protein belongs to the DNA polymerase type-B family.

The catalysed reaction is DNA(n) + a 2'-deoxyribonucleoside 5'-triphosphate = DNA(n+1) + diphosphate. Replicates viral genomic DNA. This Acidianus convivator (ABV) protein is DNA polymerase.